The following is a 454-amino-acid chain: MSEPEFQQAYEEVVSSLEDSTLFEQHPEYRKVLPIVSVPERIIQFRVTWENDKGEQEVAQGYRVQYNSAKGPYKGGLRFHPSVNLSILKFLGFEQIFKNSLTGLDMGGGKGGLCVDLKGRSNNEIRRICYAFMRELSRHIGQDTDVPAGDIGVGGREIGYLFGAYRSYKNSWEGVLTGKGLNWGGSLIRPEATGYGLVYYTQAMIDYATNGKESFEGKRVTISGSGNVAQYAALKVIELGGTVVSLSDSKGCIISETGITSEQVADISSAKVNFKSLEQIVNEYSTFSENKVQYIAGARPWTHVQKVDIALPCATQNEVSGEEAKALVAQGVKFIAEGSNMGSTPEAIAVFETARSTATGPSEAVWYGPPKAANLGGVAVSGLEMAQNSQRITWTSERVDQELKRIMINCFNECIDYAKKYTKDGKVLPSLVKGANIASFIKVSDAMFDQGDVF.

Serine 2 carries the N-acetylserine modification. Lysine 110 is an active-site residue. Glycine 174–alanine 203 serves as a coordination point for NAD(+). Residues lysine 325, lysine 371, and lysine 433 each participate in a glycyl lysine isopeptide (Lys-Gly) (interchain with G-Cter in ubiquitin) cross-link.

This sequence belongs to the Glu/Leu/Phe/Val dehydrogenases family. As to quaternary structure, homohexamer.

It carries out the reaction L-glutamate + NADP(+) + H2O = 2-oxoglutarate + NH4(+) + NADPH + H(+). Its function is as follows. Catalyzes the incorporation of an ammonium ion into alpha-ketoglutarate to form L-glutamate, the major route of assimilation of ammonia into an organic form in yeast. This Saccharomyces cerevisiae (strain ATCC 204508 / S288c) (Baker's yeast) protein is NADP-specific glutamate dehydrogenase 1.